A 115-amino-acid chain; its full sequence is Large ribosomal subunit protein bL20 (115 aa).

This sequence belongs to the bacterial ribosomal protein bL20 family.

Its function is as follows. Binds directly to 23S ribosomal RNA and is necessary for the in vitro assembly process of the 50S ribosomal subunit. It is not involved in the protein synthesizing functions of that subunit. This is Large ribosomal subunit protein bL20 from Prochlorococcus marinus (strain MIT 9515).